The following is a 70-amino-acid chain: UPF0337 protein BC_3635 (70 aa).

Belongs to the UPF0337 (CsbD) family.

This is UPF0337 protein BC_3635 from Bacillus cereus (strain ATCC 14579 / DSM 31 / CCUG 7414 / JCM 2152 / NBRC 15305 / NCIMB 9373 / NCTC 2599 / NRRL B-3711).